A 258-amino-acid polypeptide reads, in one-letter code: UPF0246 protein ACIAD2218 (258 aa).

Belongs to the UPF0246 family.

The chain is UPF0246 protein ACIAD2218 from Acinetobacter baylyi (strain ATCC 33305 / BD413 / ADP1).